A 277-amino-acid chain; its full sequence is 2-dehydro-3-deoxyphosphooctonate aldolase (277 aa).

Belongs to the KdsA family.

It is found in the cytoplasm. The enzyme catalyses D-arabinose 5-phosphate + phosphoenolpyruvate + H2O = 3-deoxy-alpha-D-manno-2-octulosonate-8-phosphate + phosphate. The protein operates within carbohydrate biosynthesis; 3-deoxy-D-manno-octulosonate biosynthesis; 3-deoxy-D-manno-octulosonate from D-ribulose 5-phosphate: step 2/3. It functions in the pathway bacterial outer membrane biogenesis; lipopolysaccharide biosynthesis. This Brucella canis (strain ATCC 23365 / NCTC 10854 / RM-666) protein is 2-dehydro-3-deoxyphosphooctonate aldolase.